A 452-amino-acid chain; its full sequence is Tubulin beta-2 chain (452 aa).

Residues Gln-11, Glu-72, Ser-141, Gly-145, Thr-146, Gly-147, Asn-207, and Asn-229 each coordinate GTP. Glu-72 contacts Mg(2+). The interval 414–452 (AESNMNDPVAEYQQYQDATADDEEEYDDEAADDHHQYES) is disordered. The span at 432 to 444 (TADDEEEYDDEAA) shows a compositional bias: acidic residues.

The protein belongs to the tubulin family. As to quaternary structure, dimer of alpha and beta chains. A typical microtubule is a hollow water-filled tube with an outer diameter of 25 nm and an inner diameter of 15 nM. Alpha-beta heterodimers associate head-to-tail to form protofilaments running lengthwise along the microtubule wall with the beta-tubulin subunit facing the microtubule plus end conferring a structural polarity. Microtubules usually have 13 protofilaments but different protofilament numbers can be found in some organisms and specialized cells. Mg(2+) is required as a cofactor.

It is found in the cytoplasm. Its subcellular location is the cytoskeleton. Functionally, tubulin is the major constituent of microtubules, a cylinder consisting of laterally associated linear protofilaments composed of alpha- and beta-tubulin heterodimers. Microtubules grow by the addition of GTP-tubulin dimers to the microtubule end, where a stabilizing cap forms. Below the cap, tubulin dimers are in GDP-bound state, owing to GTPase activity of alpha-tubulin. The protein is Tubulin beta-2 chain (TUBB2) of Solanum tuberosum (Potato).